Here is a 110-residue protein sequence, read N- to C-terminus: U1-lycotoxin-Ls1kk (110 aa).

The N-terminal stretch at 1–20 is a signal peptide; the sequence is MKFVLLFGVFLVTLFSYSSA. The propeptide occupies 21–44; it reads EMLDDFDQADEDELLSLIEKEEAR. 4 disulfide bridges follow: Cys-47–Cys-62, Cys-54–Cys-71, Cys-61–Cys-89, and Cys-73–Cys-87.

The protein belongs to the neurotoxin 19 (CSTX) family. 03 subfamily. In terms of tissue distribution, expressed by the venom gland.

It localises to the secreted. The protein is U1-lycotoxin-Ls1kk of Lycosa singoriensis (Wolf spider).